A 97-amino-acid polypeptide reads, in one-letter code: MSIRPLHDRVIVKRKEVESKSAGGIVLTGSAAGKSTRGEIIAVGKGRILDNGTVQPLDVKVGDIVIFNDGYGVKSEKIDNEEVLIMSESDILAIVEA.

It belongs to the GroES chaperonin family. As to quaternary structure, heptamer of 7 subunits arranged in a ring. Interacts with the chaperonin GroEL.

The protein resides in the cytoplasm. Functionally, together with the chaperonin GroEL, plays an essential role in assisting protein folding. The GroEL-GroES system forms a nano-cage that allows encapsulation of the non-native substrate proteins and provides a physical environment optimized to promote and accelerate protein folding. GroES binds to the apical surface of the GroEL ring, thereby capping the opening of the GroEL channel. In Salmonella agona (strain SL483), this protein is Co-chaperonin GroES.